A 376-amino-acid chain; its full sequence is TelA-like protein SERP0976 (376 aa).

The protein belongs to the TelA family.

The chain is TelA-like protein SERP0976 from Staphylococcus epidermidis (strain ATCC 35984 / DSM 28319 / BCRC 17069 / CCUG 31568 / BM 3577 / RP62A).